The following is a 528-amino-acid chain: MSQPSSDGQRQPAIVILDFGSQYSELIARRVRETEVFSVVIGYSTTADELRRMAPKGIILSGGPSSVYAEHAPVCDPAIWDLGIPVLGVCYGMQLMVQQLGGAVEAATGKAEYGKAPLEVDDPTDLLNNVENGSTMWMSHGDSVKALPEGFVRLAHTANTPEAAVANLERKFYGVQFHPEVVHSTCGMALIRNFVNHICGCEQDWTTNAFIDEAVALVREQVGQKRVLLALSGGVDSSTLAFLLKKAIGDQLTCMFIDQGFMRKGEPEFLMEFFDQKFNINVEYINARKRFIDKLKGITDPEDKRKIIGTEFIRVFEEESKRLGPFDYLAQGTLYPDVIESAGTNVDPKTGERVAVKIKSHHNVGGLPKDLRFKLVEPLRKLFKDEVRKVGRNLGLPEEIVRRHPFPGPGLAIRILGEVTDEKLNCLRDADLIVREEIRDAGLYHDIWQAFAVLLPVRSVGVMGDQRTYAWPIVLRCVSSEDGMTADWSRLPYDLMERISNRIVNEVKGVNRVVMDITSKPPGTIEWE.

Residues alanine 13–aspartate 204 enclose the Glutamine amidotransferase type-1 domain. The Nucleophile role is filled by cysteine 90. Residues histidine 178 and glutamate 180 contribute to the active site. The GMPS ATP-PPase domain maps to tryptophan 205 to arginine 403. Serine 232–serine 238 lines the ATP pocket.

As to quaternary structure, homodimer.

It carries out the reaction XMP + L-glutamine + ATP + H2O = GMP + L-glutamate + AMP + diphosphate + 2 H(+). It participates in purine metabolism; GMP biosynthesis; GMP from XMP (L-Gln route): step 1/1. Its function is as follows. Catalyzes the synthesis of GMP from XMP. This Synechococcus sp. (strain CC9902) protein is GMP synthase [glutamine-hydrolyzing].